Consider the following 317-residue polypeptide: HTH-type transcriptional regulator CfxR (317 aa).

Positions 8-65 (LTLRQLQIFVTVARHASFVRAAEELHLTQPAVSMQVKQLESVVGMALFERVKGQLTLT) constitute an HTH lysR-type domain. The H-T-H motif DNA-binding region spans 25–44 (FVRAAEELHLTQPAVSMQVK).

The protein belongs to the LysR transcriptional regulatory family.

Its function is as follows. Trans-acting transcriptional regulator of RuBisCO genes (cfxLS) expression. In Cupriavidus necator (strain ATCC 17699 / DSM 428 / KCTC 22496 / NCIMB 10442 / H16 / Stanier 337) (Ralstonia eutropha), this protein is HTH-type transcriptional regulator CfxR (cfxR).